A 502-amino-acid chain; its full sequence is Glycerol kinase (502 aa).

T14 contacts ADP. ATP is bound by residues T14, T15, and S16. Position 14 (T14) interacts with sn-glycerol 3-phosphate. R18 contributes to the ADP binding site. Sn-glycerol 3-phosphate contacts are provided by R84, E85, and Y136. Residues R84, E85, and Y136 each coordinate glycerol. H232 bears the Phosphohistidine; by HPr mark. D246 contributes to the sn-glycerol 3-phosphate binding site. The glycerol site is built by D246 and Q247. Residues T268 and G311 each contribute to the ADP site. T268, G311, Q315, and G412 together coordinate ATP. The ADP site is built by G412 and N416.

This sequence belongs to the FGGY kinase family. As to quaternary structure, homotetramer and homodimer (in equilibrium). In terms of processing, the phosphoenolpyruvate-dependent sugar phosphotransferase system (PTS), including enzyme I, and histidine-containing protein (HPr) are required for the phosphorylation, which leads to the activation of the enzyme.

The catalysed reaction is glycerol + ATP = sn-glycerol 3-phosphate + ADP + H(+). It participates in polyol metabolism; glycerol degradation via glycerol kinase pathway; sn-glycerol 3-phosphate from glycerol: step 1/1. Activated by phosphorylation and inhibited by fructose 1,6-bisphosphate (FBP). In terms of biological role, key enzyme in the regulation of glycerol uptake and metabolism. Catalyzes the phosphorylation of glycerol to yield sn-glycerol 3-phosphate. The polypeptide is Glycerol kinase (Streptococcus pneumoniae (strain P1031)).